The chain runs to 900 residues: Aldos-2-ulose dehydratase (900 aa).

A dehydratase domain region spans residues 1-433; that stretch reads MYSKVFLKPH…NPSINVFLST (433 aa). Tyrosine 35 contacts ascopyrone M. Residues aspartate 101, threonine 103, asparagine 105, phenylalanine 107, and aspartate 109 each coordinate Mg(2+). Ascopyrone M contacts are provided by tyrosine 116, methionine 120, histidine 155, histidine 215, histidine 295, and histidine 337. Histidine 155 acts as the Proton acceptor in catalysis. Positions 215, 295, 337, 343, 345, 347, 349, and 351 each coordinate Zn(2+). Residues tyrosine 414, tyrosine 419, and alanine 627 each contribute to the ascopyrone M site. Positions 434–739 are isomerase domain; sequence GILAERLDEE…EFPGFETFST (306 aa). 2 residues coordinate 1,5-anhydro-D-fructose: alanine 627 and histidine 630. Zn(2+)-binding residues include histidine 630, histidine 632, and glutamate 639. Ascopyrone M is bound by residues glutamate 639 and histidine 641. Residue histidine 641 coordinates 1,5-anhydro-D-fructose. Histidine 709 serves as a coordination point for Zn(2+). Position 726 (tryptophan 726) interacts with ascopyrone M. Tryptophan 726 provides a ligand contact to 1,5-anhydro-D-fructose.

As to quaternary structure, homodimer. Zn(2+) is required as a cofactor.

It carries out the reaction 1,5-anhydro-D-fructose = microthecin + H2O. It catalyses the reaction 1,5-anhydro-D-fructose = ascopyrone M + H2O. The enzyme catalyses ascopyrone M = microthecin. The catalysed reaction is 2-dehydro-D-glucose = cortalcerone + H2O. It functions in the pathway carbohydrate metabolism; 1,5-anhydro-D-fructose degradation. Its function is as follows. A bifunctional enzyme which catalyzes the dehydration of anhydrofructose into ascopyrone M, and the isomerization of ascopyrone M into microthecin. To a lesser extent, can also act on 2-dehydro-D-glucopyranose (D-glucosone), leading to the antibiotic cortalcerone. This chain is Aldos-2-ulose dehydratase, found in Phanerodontia chrysosporium (White-rot fungus).